A 529-amino-acid polypeptide reads, in one-letter code: Cytochrome P450 monooxygenase 45 (529 aa).

The chain crosses the membrane as a helical span at residues 24–44 (VLTICILALLTFVLREIVLYF). 2 N-linked (GlcNAc...) asparagine glycosylation sites follow: N185 and N322. Heme is bound at residue C454.

The protein belongs to the cytochrome P450 family. Heme is required as a cofactor.

It is found in the membrane. Its pathway is secondary metabolite biosynthesis. Cytochrome P450 monooxygenase that is able to use trans-stilbene as a substrate for oxidation. The sequence is that of Cytochrome P450 monooxygenase 45 from Postia placenta (strain ATCC 44394 / Madison 698-R) (Brown rot fungus).